Consider the following 603-residue polypeptide: uncharacterized protein (603 aa).

Positions Glu496–Lys513 are enriched in acidic residues. Disordered stretches follow at residues Glu496–Glu536 and Ala549–Gln568. Over residues Asn517 to Gly533 the composition is skewed to polar residues.

The protein belongs to the herpesviridae US22 family.

This is an uncharacterized protein from Human cytomegalovirus (strain AD169) (HHV-5).